A 138-amino-acid polypeptide reads, in one-letter code: Small ribosomal subunit protein uS11c (138 aa).

The tract at residues 1-23 (MAKPILRIGSRKNTRSGSRKNVR) is disordered. The segment covering 9–23 (GSRKNTRSGSRKNVR) has biased composition (basic residues).

The protein belongs to the universal ribosomal protein uS11 family. In terms of assembly, part of the 30S ribosomal subunit.

It localises to the plastid. The protein resides in the chloroplast. This is Small ribosomal subunit protein uS11c from Barbarea verna (Land cress).